We begin with the raw amino-acid sequence, 187 residues long: UPF0301 protein Noc_0368 (187 aa).

This sequence belongs to the UPF0301 (AlgH) family.

This is UPF0301 protein Noc_0368 from Nitrosococcus oceani (strain ATCC 19707 / BCRC 17464 / JCM 30415 / NCIMB 11848 / C-107).